Reading from the N-terminus, the 263-residue chain is 3-methyl-2-oxobutanoate hydroxymethyltransferase (263 aa).

Residues aspartate 43 and aspartate 82 each coordinate Mg(2+). 3-methyl-2-oxobutanoate-binding positions include 43-44 (DS), aspartate 82, and lysine 111. Glutamate 113 is a Mg(2+) binding site. Glutamate 180 serves as the catalytic Proton acceptor.

It belongs to the PanB family. As to quaternary structure, homodecamer; pentamer of dimers. Requires Mg(2+) as cofactor.

It localises to the cytoplasm. It carries out the reaction 3-methyl-2-oxobutanoate + (6R)-5,10-methylene-5,6,7,8-tetrahydrofolate + H2O = 2-dehydropantoate + (6S)-5,6,7,8-tetrahydrofolate. The protein operates within cofactor biosynthesis; (R)-pantothenate biosynthesis; (R)-pantoate from 3-methyl-2-oxobutanoate: step 1/2. In terms of biological role, catalyzes the reversible reaction in which hydroxymethyl group from 5,10-methylenetetrahydrofolate is transferred onto alpha-ketoisovalerate to form ketopantoate. In Bdellovibrio bacteriovorus (strain ATCC 15356 / DSM 50701 / NCIMB 9529 / HD100), this protein is 3-methyl-2-oxobutanoate hydroxymethyltransferase.